The following is a 539-amino-acid chain: Eukaryotic translation initiation factor 3 subunit L (539 aa).

The PCI domain maps to 306–514 (TFSDILLYVQ…IHIADTKVSH (209 aa)).

The protein belongs to the eIF-3 subunit L family. In terms of assembly, component of the eukaryotic translation initiation factor 3 (eIF-3) complex. The eIF-3 complex interacts with pix.

The protein resides in the cytoplasm. Functionally, component of the eukaryotic translation initiation factor 3 (eIF-3) complex, which is involved in protein synthesis of a specialized repertoire of mRNAs and, together with other initiation factors, stimulates binding of mRNA and methionyl-tRNAi to the 40S ribosome. The eIF-3 complex specifically targets and initiates translation of a subset of mRNAs involved in cell proliferation. The protein is Eukaryotic translation initiation factor 3 subunit L of Drosophila willistoni (Fruit fly).